The primary structure comprises 263 residues: MKMRLHFVVDPMGWFCMSMVFFVWIYNSFLIPKLVLLPHYAEGHITAEPVICYYLASLLCFSALFRASTTDPGKLAQDPKIPLAERDNWELCNKCNMMRPKRSHHCSRCGHCVRRMDHHCPWINNCVGEDNHWLFLQLCFYTQVLSFYTLVLDFCQYYYFLPLSSVDQADFAVHHELALLRVSCFMGLIMFGGISSLFYTQVKGILTDTTTIEKMSHLTEEVPRRPWQQAMAEVFGTRWKVLWFLPFRSRHPLKLNLTIRSHV.

Residues 1–4 (MKMR) lie on the Cytoplasmic side of the membrane. Residues 5–25 (LHFVVDPMGWFCMSMVFFVWI) form a helical membrane-spanning segment. Over 26–44 (YNSFLIPKLVLLPHYAEGH) the chain is Extracellular. A helical transmembrane segment spans residues 45–65 (ITAEPVICYYLASLLCFSALF). Over 66-131 (RASTTDPGKL…WINNCVGEDN (66 aa)) the chain is Cytoplasmic. A DHHC domain is found at 90-140 (ELCNKCNMMRPKRSHHCSRCGHCVRRMDHHCPWINNCVGEDNHWLFLQLCF). Cysteine 120 functions as the S-palmitoyl cysteine intermediate in the catalytic mechanism. A helical membrane pass occupies residues 132-152 (HWLFLQLCFYTQVLSFYTLVL). The Extracellular portion of the chain corresponds to 153–181 (DFCQYYYFLPLSSVDQADFAVHHELALLR). The chain crosses the membrane as a helical span at residues 182–202 (VSCFMGLIMFGGISSLFYTQV). Over 203-263 (KGILTDTTTI…KLNLTIRSHV (61 aa)) the chain is Cytoplasmic.

It belongs to the DHHC palmitoyltransferase family.

The protein resides in the golgi apparatus membrane. It localises to the golgi apparatus. It is found in the cis-Golgi network membrane. Its subcellular location is the cell membrane. It carries out the reaction L-cysteinyl-[protein] + hexadecanoyl-CoA = S-hexadecanoyl-L-cysteinyl-[protein] + CoA. Functionally, palmitoyltransferase that catalyzes the addition of palmitate onto various protein substrates. The polypeptide is Palmitoyltransferase ZDHHC21 (Danio rerio (Zebrafish)).